Reading from the N-terminus, the 669-residue chain is Probable pectinesterase/pectinesterase inhibitor 21 (669 aa).

Residues 16–36 (IVITISSVLLISMVVAVTVGV) traverse the membrane as a helical segment. N-linked (GlcNAc...) asparagine glycans are attached at residues asparagine 52, asparagine 81, asparagine 94, asparagine 281, and asparagine 300. Residues 52-205 (NASVKAVKDV…IELTHNGLAI (154 aa)) form a pectinesterase inhibitor 21 region. The interval 255 to 551 (DIVVAQDGSG…FTPAQYIQGD (297 aa)) is pectinesterase 21. Residues threonine 330 and glutamine 360 each contribute to the substrate site. The active-site Proton donor; for pectinesterase activity is the aspartate 383. Residues cysteine 397 and cysteine 417 are joined by a disulfide bond. Aspartate 404 (nucleophile; for pectinesterase activity) is an active-site residue. N-linked (GlcNAc...) asparagine glycosylation is present at asparagine 416. Substrate is bound by residues arginine 472 and tryptophan 474. The segment at 615 to 669 (AYTGTASPESSIKVSSSTETASPESSFTEASTASPESSIMVASTESSGSFFSMFT) is disordered. Positions 616–628 (YTGTASPESSIKV) are enriched in polar residues. Residues 629–652 (SSSTETASPESSFTEASTASPESS) show a composition bias toward low complexity. The segment covering 654 to 669 (MVASTESSGSFFSMFT) has biased composition (polar residues).

In the N-terminal section; belongs to the PMEI family. This sequence in the C-terminal section; belongs to the pectinesterase family. Expressed in flower buds.

The protein resides in the membrane. The enzyme catalyses [(1-&gt;4)-alpha-D-galacturonosyl methyl ester](n) + n H2O = [(1-&gt;4)-alpha-D-galacturonosyl](n) + n methanol + n H(+). The protein operates within glycan metabolism; pectin degradation; 2-dehydro-3-deoxy-D-gluconate from pectin: step 1/5. Acts in the modification of cell walls via demethylesterification of cell wall pectin. The chain is Probable pectinesterase/pectinesterase inhibitor 21 (PME21) from Arabidopsis thaliana (Mouse-ear cress).